Here is a 237-residue protein sequence, read N- to C-terminus: UPF0174 protein YaaW (237 aa).

Belongs to the UPF0174 family.

This Escherichia coli (strain K12) protein is UPF0174 protein YaaW (yaaW).